The following is a 250-amino-acid chain: MSQLEKIYGVHAVEALLRHHPKRVKHIWLAEGRNDPRVQTLVALASENRVTIGQAERREMDAWVEGVHQGVVADVSPSQVWGEAMLDELLDRSEGPPLLLVLDGVTDPHNLGACLRTADAAGALAVIVPKDKSATLTPAVRKVACGAAEVIPLVAVTNLARTLEKLQQRGLWVVGTAGEAEVELYQQDLTGPTIIIMGAEGKGMRRLTREHCDYLVRLPMAGSVSSLNVSVATGVCLFEALRQRSAKRKP.

The S-adenosyl-L-methionine site is built by Gly-198, Leu-218, and Leu-227.

It belongs to the class IV-like SAM-binding methyltransferase superfamily. RNA methyltransferase TrmH family. RlmB subfamily.

It is found in the cytoplasm. The catalysed reaction is guanosine(2251) in 23S rRNA + S-adenosyl-L-methionine = 2'-O-methylguanosine(2251) in 23S rRNA + S-adenosyl-L-homocysteine + H(+). In terms of biological role, specifically methylates the ribose of guanosine 2251 in 23S rRNA. This chain is 23S rRNA (guanosine-2'-O-)-methyltransferase RlmB, found in Pseudomonas syringae pv. tomato (strain ATCC BAA-871 / DC3000).